We begin with the raw amino-acid sequence, 202 residues long: uncharacterized protein (202 aa).

This is an uncharacterized protein from Escherichia coli (Bacteriophage T4).